Consider the following 127-residue polypeptide: Turripeptide OL172 (127 aa).

An N-terminal signal peptide occupies residues 1–20 (MFSTLIFLTAVTLLMMPSQT). Residues 42 to 43 (QR) constitute a propeptide that is removed on maturation. Pyrrolidone carboxylic acid is present on glutamine 44. Positions 73-75 (QRK) are excised as a propeptide. The residue at position 76 (glutamine 76) is a Pyrrolidone carboxylic acid. Residues 104-106 (QRK) constitute a propeptide that is removed on maturation. Glutamine 107 bears the Pyrrolidone carboxylic acid mark.

Post-translationally, the turripeptide OL172 conotoxin-like contains 2 disulfide bonds. In terms of tissue distribution, expressed by the venom duct.

The protein localises to the secreted. In terms of biological role, acts as a neurotoxin by inhibiting an ion channel. The protein is Turripeptide OL172 of Iotyrris olangoensis (Sea snail).